A 73-amino-acid polypeptide reads, in one-letter code: Disintegrin molossin (73 aa).

The Disintegrin domain maps to 1-73; sequence EAGIECDCGS…ADCPRNRFHA (73 aa). 6 cysteine pairs are disulfide-bonded: Cys6-Cys21, Cys8-Cys16, Cys15-Cys38, Cys29-Cys35, Cys34-Cys59, and Cys47-Cys66. The Cell attachment site signature appears at 51–53; that stretch reads RGD.

Belongs to the venom metalloproteinase (M12B) family. P-II subfamily. P-IIa sub-subfamily. Monomer (disintegrin). Expressed by the venom gland.

The protein resides in the secreted. Inhibits fibrinogen interaction with platelets. Acts by binding to alpha-IIb/beta-3 (ITGA2B/ITGB3) on the platelet surface and inhibits aggregation induced by ADP, thrombin, platelet-activating factor and collagen. This Crotalus molossus molossus (Northern black-tailed rattlesnake) protein is Disintegrin molossin.